The following is a 259-amino-acid chain: 3-deoxy-manno-octulosonate cytidylyltransferase (259 aa).

This sequence belongs to the KdsB family.

It localises to the cytoplasm. The enzyme catalyses 3-deoxy-alpha-D-manno-oct-2-ulosonate + CTP = CMP-3-deoxy-beta-D-manno-octulosonate + diphosphate. It participates in nucleotide-sugar biosynthesis; CMP-3-deoxy-D-manno-octulosonate biosynthesis; CMP-3-deoxy-D-manno-octulosonate from 3-deoxy-D-manno-octulosonate and CTP: step 1/1. The protein operates within bacterial outer membrane biogenesis; lipopolysaccharide biosynthesis. Its function is as follows. Activates KDO (a required 8-carbon sugar) for incorporation into bacterial lipopolysaccharide in Gram-negative bacteria. This is 3-deoxy-manno-octulosonate cytidylyltransferase from Xanthomonas oryzae pv. oryzae (strain KACC10331 / KXO85).